A 464-amino-acid polypeptide reads, in one-letter code: E3 ubiquitin-protein ligase ITT1 (464 aa).

A TRIAD supradomain region spans residues 176 to 455 (SNYHCCICME…EAYSGCYGRL (280 aa)). The Zn(2+) site is built by Cys-180, Cys-183, Cys-207, Cys-210, Cys-290, Cys-300, Cys-316, Cys-319, Cys-402, and Cys-405. Residues 180 to 236 (CCICMEMEKGVRMIKLPCENANVEHYLCRGCAKSYFTAMIQENRISSVRCPQCEYKE) form an RING-type 1 zinc finger. The segment at 267-338 (DTELCERYEK…HAWHGYNNKC (72 aa)) adopts an IBR-type zinc-finger fold. An RING-type 2; atypical zinc finger spans residues 402-431 (CPKCKVVVERSEGCNKMKCEVCGTLFCFIC). The active site involves Cys-415. Zn(2+) contacts are provided by Cys-420, Cys-423, Cys-428, Cys-431, His-443, and Cys-451.

It belongs to the RBR family. RNF14 subfamily. As to quaternary structure, interacts with translation release factors eRF1 (SUP45) and eRF3 (SUP35) in vitro.

The catalysed reaction is [E2 ubiquitin-conjugating enzyme]-S-ubiquitinyl-L-cysteine + [acceptor protein]-L-lysine = [E2 ubiquitin-conjugating enzyme]-L-cysteine + [acceptor protein]-N(6)-ubiquitinyl-L-lysine.. Its pathway is protein modification; protein ubiquitination. E3 ubiquitin-protein ligase involved in translation quality control. Involved in the rescue of stalled ribosomes by promoting ubiquitination and degradation of proteins on stalled ribosomes. Specifically required to resolve RNA-protein cross-links caused by reactive aldehydes, which trigger translation stress by stalling ribosomes: acts by catalying 'Lys-6'-linked ubiquitination of RNA-protein cross-links, leading to their degradation. Interacts with the translation termination factors eRF1 (SUP45) and eRF3 (SUP35); overexpression decreases the efficiency of translation termination. The chain is E3 ubiquitin-protein ligase ITT1 from Saccharomyces cerevisiae (strain ATCC 204508 / S288c) (Baker's yeast).